The chain runs to 1919 residues: MAESNGKGSHNETSSDDDDEYEDNSRGFNLGFIFGNVDNSGDLDADYLDEDAKEHLSALADKLGSSLPDINLLAKSERTASDPAEQDYDRKAEDAVDYEDIDEEYDGPEVQVVSEEDHLLPKKEYFSTAVALGSLKSRASVFDDEDYDEEEEQEEEQAPVEKSLETEKREPVVLKEDKALEYEEEASILDKEDHMDTEDVQEEEVDELLEGTLDDKGATPLPTLYVEDGMVILQFSEIFAIHEPPQKRDRRENRYVTCRDKYKSMDISELVEDDEEVLLKSHGRIDTHVEQADLIQLDVPFPIREGLQLVKASTIGGITPESREFTKLGRDSCIMGELLKQDFIDDNSSLCQSQLSMQVFPLDQHEWERRIIWEHSPEISGNSGEIFEPGLEPEGMLVKGTNSETEQESLNVVNSRVQVQADNNMFVPFSANLLESFGSRGSQSTNESTNKSRHHPQLLRLESQWDENHLSGNDEAGVKKIKRLEKDALGRFSRLVLRERDLGDEAWLDSIIWDSEKELSRSKLIFDLQDEQMVFEIFDNEESKNLQLHAGAMIVSRSSKSKDETFQEGCESNSGWQFNLSNDKFYMNGKSSQQLQANTNKSSVHSLRVFHSVPAIKLQTMKSKLSNKDIANFHRPKALWYPHDNELAIKQQGKLPTRGSMKIIVKSLGGKGSKLHVGIEESVSSLRAKASRKLDFKETEAVKMFYKGKELDDEKSLAAQNVQPNSLVHLIRTKVHLWPWAQKLPGENKSLRPPGAFKKKSDLSTKDGHVFLMEYCEERPLMLSNAGMGANLCTYYQKSSPEDQRGNLLRNQSDTLGNVMILEPGDKSPFLGEIHAGCSQSSVETNMYKAPIFPQRLQSTDYLLVRSPKGKLSLRRIDKIVVVGQQEPRMEVMSPGSKNLQTYLVNRMLVYVYREFFKRGGGEHPIAADELSFLFSNLTDAIIKKNMKIIACWKRDKNGQSYWTKKDSLLEPPESELKKLVAPEHVCSYESMLAGLYRLKHLGITRFTLPASISNALAQLPDEAIALAAASHIERELQITPWNLSSNFVACTNQDRANIERLEITGVGDPSGRGLGFSYVRAAPKAPAAAGHMKKKAAAGRGAPTVTGTDADLRRLSMEAAREVLIKFNVPDEIIAKQTRWHRIAMIRKLSSEQAASGVKVDPTTIGKYARGQRMSFLQMQQQAREKCQEIWDRQLLSLSAFDGDENESENEANSDLDSFAGDLENLLDAEEGGEGEESNISKNDKLDGVKGLKMRRRPSQVETDEEIEDEATEYAELCRLLMQDEDQKKKKKKMKGVGEGMGSYPPPRPNIALQSGEPVRKANAMDKKPIAIQPDASFLVNESTIKDNRNVDSIIKTPKGKQVKENSNSLGQLKKVKILNENLKVFKEKKSARENFVCGACGQHGHMRTNKHCPRYRENTESQPEGIDMDKSAGKPSSSEPSGLPKLKPIKNSKAAPKSAMKTSVDEALKGDKLSSKTGGLPLKFRYGIPAGDLSDKPVSEAPGSSEQAVVSDIDTGIKSTSKISKLKISSKAKPKESKGESERRSHSLMPTFSRERGESESHKPSVSGQPLSSTERNQAASSRHTISIPRPSLSMDTDQAESRRPHLVIRPPTEREQPQKKLVIKRSKEMNDHDMSSLEESPRFESRKTKRMAELAGFQRQQSFRLSENSLERRPKEDRVWWEEEEISTGRHREVRARRDYDDMSVSEEPNEIAEIRRYEEVIRSEREEEERQKAKKKKKKKKLQPEIVEGYLEDYPPRKNDRRLSERGRNVRSRYVSDFERDGAEYAPQPKRRKKGEVGLANILERIVDTLRLKEEVSRLFLKPVSKKEAPDYLDIVENPMDLSTIRDKVRKIEYRNREQFRHDVWQIKYNAHLYNDGRNPGIPPLADQLLEICDYLLDDYEDQLKEAEKGIDPND.

Disordered regions lie at residues 1-25 and 143-169; these read MAESNGKGSHNETSSDDDDEYEDNS and DDEDYDEEEEQEEEQAPVEKSLETEKR. Residues 143 to 158 are compositionally biased toward acidic residues; sequence DDEDYDEEEEQEEEQA. A Ubiquitin-like domain is found at 661–737; it reads MKIIVKSLGG…VHLIRTKVHL (77 aa). Disordered regions lie at residues 1287 to 1314, 1408 to 1679, and 1726 to 1746; these read DQKKKKKKMKGVGEGMGSYPPPRPNIAL, MRTN…RPKE, and RSEREEEERQKAKKKKKKKKL. Composition is skewed to basic and acidic residues over residues 1465 to 1476, 1535 to 1547, and 1555 to 1565; these read SVDEALKGDKLS, KPKESKGESERRS, and SRERGESESHK. Positions 1566–1587 are enriched in polar residues; the sequence is PSVSGQPLSSTERNQAASSRHT. Positions 1628–1655 are enriched in basic and acidic residues; that stretch reads RSKEMNDHDMSSLEESPRFESRKTKRMA. A compositionally biased stretch (polar residues) spans 1661 to 1671; it reads QRQQSFRLSEN. Residues 1713–1750 adopt a coiled-coil conformation; it reads NEIAEIRRYEEVIRSEREEEERQKAKKKKKKKKLQPEI. The segment covering 1726 to 1735 has biased composition (basic and acidic residues); the sequence is RSEREEEERQ. The segment covering 1736-1745 has biased composition (basic residues); the sequence is KAKKKKKKKK. In terms of domain architecture, Bromo spans 1794-1911; the sequence is KRRKKGEVGL…DDYEDQLKEA (118 aa).

It belongs to the TAF1 family. As to quaternary structure, component of the TFIID complex. TFIID is composed of TATA binding protein (TBP) and a number of TBP-associated factors (TAFs) whose MWs range from 14-217 kDa. Interacts with TAF7 and TAF14B, and (via N-terminus) with TBP1 and TBP2. Expressed in roots, leaves and inflorescences.

The protein localises to the nucleus. TAFs are components of the transcription factor IID (TFIID) complex that is essential for mediating regulation of RNA polymerase transcription. Core scaffold of the TFIID complex. The protein is Transcription initiation factor TFIID subunit 1 (TAF1) of Arabidopsis thaliana (Mouse-ear cress).